Consider the following 239-residue polypeptide: Small ribosomal subunit protein uS3 (239 aa).

A KH type-2 domain is found at 38–106 (IRELIEERFK…KTFVNVVEIK (69 aa)).

The protein belongs to the universal ribosomal protein uS3 family. Part of the 30S ribosomal subunit. Forms a tight complex with proteins S10 and S14.

In terms of biological role, binds the lower part of the 30S subunit head. Binds mRNA in the 70S ribosome, positioning it for translation. This chain is Small ribosomal subunit protein uS3, found in Elusimicrobium minutum (strain Pei191).